The sequence spans 319 residues: Aspartate carbamoyltransferase catalytic subunit (319 aa).

The carbamoyl phosphate site is built by arginine 64 and threonine 65. Lysine 92 provides a ligand contact to L-aspartate. Carbamoyl phosphate contacts are provided by arginine 114, histidine 142, and glutamine 145. The L-aspartate site is built by arginine 175 and arginine 229. Residues glycine 270 and proline 271 each coordinate carbamoyl phosphate.

Belongs to the aspartate/ornithine carbamoyltransferase superfamily. ATCase family. In terms of assembly, heterododecamer (2C3:3R2) of six catalytic PyrB chains organized as two trimers (C3), and six regulatory PyrI chains organized as three dimers (R2).

The enzyme catalyses carbamoyl phosphate + L-aspartate = N-carbamoyl-L-aspartate + phosphate + H(+). Its pathway is pyrimidine metabolism; UMP biosynthesis via de novo pathway; (S)-dihydroorotate from bicarbonate: step 2/3. Functionally, catalyzes the condensation of carbamoyl phosphate and aspartate to form carbamoyl aspartate and inorganic phosphate, the committed step in the de novo pyrimidine nucleotide biosynthesis pathway. This Rhodospirillum rubrum (strain ATCC 11170 / ATH 1.1.1 / DSM 467 / LMG 4362 / NCIMB 8255 / S1) protein is Aspartate carbamoyltransferase catalytic subunit.